The chain runs to 464 residues: Soluble pyridine nucleotide transhydrogenase (464 aa).

Residue 35–44 participates in FAD binding; it reads DSRRQVGGNC.

It belongs to the class-I pyridine nucleotide-disulfide oxidoreductase family. It depends on FAD as a cofactor.

The protein localises to the cytoplasm. It carries out the reaction NAD(+) + NADPH = NADH + NADP(+). In terms of biological role, conversion of NADPH, generated by peripheral catabolic pathways, to NADH, which can enter the respiratory chain for energy generation. This Pseudomonas putida (strain W619) protein is Soluble pyridine nucleotide transhydrogenase.